A 677-amino-acid polypeptide reads, in one-letter code: Pentatricopeptide repeat-containing protein At5g39350 (677 aa).

PPR repeat units lie at residues 48-78, 79-113, 116-146, 151-181, 182-216, 217-251, 252-282, 283-317, 318-352, 353-383, 384-418, 419-453, 454-488, 489-523, 524-554, and 560-590; these read SGHI…MPQS, SLLS…GVKC, DGYT…ILRS, DKYV…MKNR, DVIS…SVDL, DHAT…RLGD, KIEV…MERR, DVIT…GVRP, NAVT…QVYS, DIII…ASKY, HTGP…DVEP, NIAT…GFMS, SLDA…HKSK, DVVL…GVTP, NEIT…MLEH, and RSNH…IPFE. The tract at residues 595-670 is type E motif; it reads VWGALLAACV…KPGHSTIEIR (76 aa).

Belongs to the PPR family. PCMP-E subfamily.

This is Pentatricopeptide repeat-containing protein At5g39350 (PCMP-E16) from Arabidopsis thaliana (Mouse-ear cress).